Reading from the N-terminus, the 226-residue chain is tRNA (guanine-N(1)-)-methyltransferase (226 aa).

Residues Gly-112 and 132–137 (IGDYVL) contribute to the S-adenosyl-L-methionine site.

It belongs to the RNA methyltransferase TrmD family. As to quaternary structure, homodimer.

Its subcellular location is the cytoplasm. The catalysed reaction is guanosine(37) in tRNA + S-adenosyl-L-methionine = N(1)-methylguanosine(37) in tRNA + S-adenosyl-L-homocysteine + H(+). Specifically methylates guanosine-37 in various tRNAs. The chain is tRNA (guanine-N(1)-)-methyltransferase from Christiangramia forsetii (strain DSM 17595 / CGMCC 1.15422 / KT0803) (Gramella forsetii).